Reading from the N-terminus, the 274-residue chain is Rhamnulose-1-phosphate aldolase (274 aa).

Glu117 is a catalytic residue. Zn(2+) is bound by residues His141, His143, and His212.

The protein belongs to the aldolase class II family. RhaD subfamily. Homotetramer. The cofactor is Zn(2+).

It localises to the cytoplasm. It carries out the reaction L-rhamnulose 1-phosphate = (S)-lactaldehyde + dihydroxyacetone phosphate. Its pathway is carbohydrate degradation; L-rhamnose degradation; glycerone phosphate from L-rhamnose: step 3/3. Its function is as follows. Catalyzes the reversible cleavage of L-rhamnulose-1-phosphate to dihydroxyacetone phosphate (DHAP) and L-lactaldehyde. The chain is Rhamnulose-1-phosphate aldolase from Shigella sonnei (strain Ss046).